A 439-amino-acid chain; its full sequence is tRNA-2-methylthio-N(6)-dimethylallyladenosine synthase (439 aa).

One can recognise an MTTase N-terminal domain in the interval 2–119; that stretch reads KKLYLKTHGC…LPDLLDSVIQ (118 aa). [4Fe-4S] cluster is bound by residues Cys-11, Cys-48, Cys-82, Cys-156, Cys-160, and Cys-163. One can recognise a Radical SAM core domain in the interval 142–374; that stretch reads RAEGPSAFVS…QNRINVKAAE (233 aa). Residues 377 to 439 form the TRAM domain; it reads QSMVGTQQRI…RPYSLWGEIC (63 aa).

It belongs to the methylthiotransferase family. MiaB subfamily. As to quaternary structure, monomer. It depends on [4Fe-4S] cluster as a cofactor.

Its subcellular location is the cytoplasm. It catalyses the reaction N(6)-dimethylallyladenosine(37) in tRNA + (sulfur carrier)-SH + AH2 + 2 S-adenosyl-L-methionine = 2-methylsulfanyl-N(6)-dimethylallyladenosine(37) in tRNA + (sulfur carrier)-H + 5'-deoxyadenosine + L-methionine + A + S-adenosyl-L-homocysteine + 2 H(+). Functionally, catalyzes the methylthiolation of N6-(dimethylallyl)adenosine (i(6)A), leading to the formation of 2-methylthio-N6-(dimethylallyl)adenosine (ms(2)i(6)A) at position 37 in tRNAs that read codons beginning with uridine. This chain is tRNA-2-methylthio-N(6)-dimethylallyladenosine synthase, found in Coxiella burnetii (strain Dugway 5J108-111).